The following is a 768-amino-acid chain: ATP-dependent zinc metalloprotease FtsH (768 aa).

Topologically, residues 1–33 (MADRDKNDIRKRLEELRKDNNRRNNRQDNGNRS) are cytoplasmic. The helical transmembrane segment at 34 to 54 (PFSGFLFFIFVILLFTFTLLF) threads the bilayer. Over 55-139 (HRDIQTYFQE…KLNSLQPSGG (85 aa)) the chain is Periplasmic. A helical membrane pass occupies residues 140-160 (GFFLLLLGQFLPMIIMIGLMV). Residues 161–768 (YLAKKMVGGS…SNFKLPSFME (608 aa)) lie on the Cytoplasmic side of the membrane. 238 to 245 (GRPGTGKT) contributes to the ATP binding site. H461 is a Zn(2+) binding site. E462 is an active-site residue. 2 residues coordinate Zn(2+): H465 and D536. A disordered region spans residues 647-768 (EESIQKGSEG…SNFKLPSFME (122 aa)). The segment covering 669-698 (QENKTVEAEVHDSNLKSDTEKLAEAVREIT) has biased composition (basic and acidic residues). The span at 715 to 731 (KDSDDNEKNDDDNENSD) shows a compositional bias: acidic residues.

It in the central section; belongs to the AAA ATPase family. In the C-terminal section; belongs to the peptidase M41 family. As to quaternary structure, homohexamer. The cofactor is Zn(2+).

The protein resides in the cell inner membrane. Its function is as follows. Acts as a processive, ATP-dependent zinc metallopeptidase for both cytoplasmic and membrane proteins. Plays a role in the quality control of integral membrane proteins. The chain is ATP-dependent zinc metalloprotease FtsH from Leptotrichia buccalis (strain ATCC 14201 / DSM 1135 / JCM 12969 / NCTC 10249 / C-1013-b).